Consider the following 397-residue polypeptide: Phosphoglycerate kinase (397 aa).

Substrate contacts are provided by residues 21 to 23 (DFN), Arg-36, 59 to 62 (HCGR), Arg-118, and Arg-151. ATP-binding positions include Lys-201, Glu-323, and 353-356 (GGDT).

It belongs to the phosphoglycerate kinase family. Monomer.

It is found in the cytoplasm. The enzyme catalyses (2R)-3-phosphoglycerate + ATP = (2R)-3-phospho-glyceroyl phosphate + ADP. It participates in carbohydrate degradation; glycolysis; pyruvate from D-glyceraldehyde 3-phosphate: step 2/5. This is Phosphoglycerate kinase from Bartonella henselae (strain ATCC 49882 / DSM 28221 / CCUG 30454 / Houston 1) (Rochalimaea henselae).